The chain runs to 398 residues: Na(+)/H(+) antiporter NhaA (398 aa).

The next 11 membrane-spanning stretches (helical) occupy residues 14-34 (AAGVMLMMATVLALTFANWSV), 60-80 (LLLWINDGLMAIFFLLIGLEV), 96-116 (MLPLAAAVGGMVFPALFFLLF), 125-145 (VGWAIPAATDIAFAIGVLTLL), 155-175 (VFLLALAIIDDLGAILIIALF), 179-199 (QIFWPALGGAVLAVAALAYLN), 214-234 (IVLWVCILKCGVHATLAGVIV), 263-283 (FLIIPLFAFANAGIVLQGIVL), 292-312 (LGIAAGLLVGKPLGITLLSWL), 330-350 (IVAVSVLCGIGFTMSIFITLL), and 362-382 (YAKLGILLASGLAALLGYLAL).

This sequence belongs to the NhaA Na(+)/H(+) (TC 2.A.33) antiporter family.

Its subcellular location is the cell inner membrane. The catalysed reaction is Na(+)(in) + 2 H(+)(out) = Na(+)(out) + 2 H(+)(in). Functionally, na(+)/H(+) antiporter that extrudes sodium in exchange for external protons. The sequence is that of Na(+)/H(+) antiporter NhaA from Pectobacterium carotovorum subsp. carotovorum (strain PC1).